Reading from the N-terminus, the 446-residue chain is tRNA-2-methylthio-N(6)-dimethylallyladenosine synthase (446 aa).

Residues 6–122 enclose the MTTase N-terminal domain; it reads RRYHITTFGC…LGDLLQQVFD (117 aa). Residues cysteine 15, cysteine 51, cysteine 85, cysteine 157, cysteine 161, and cysteine 164 each contribute to the [4Fe-4S] cluster site. The region spanning 143–380 is the Radical SAM core domain; it reads RDSNITAWVN…NHLVATKAAE (238 aa). Residues 383 to 446 enclose the TRAM domain; that stretch reads QRYLGRIEEI…RPFSLTGVIF (64 aa).

The protein belongs to the methylthiotransferase family. MiaB subfamily. Monomer. [4Fe-4S] cluster serves as cofactor.

It localises to the cytoplasm. The catalysed reaction is N(6)-dimethylallyladenosine(37) in tRNA + (sulfur carrier)-SH + AH2 + 2 S-adenosyl-L-methionine = 2-methylsulfanyl-N(6)-dimethylallyladenosine(37) in tRNA + (sulfur carrier)-H + 5'-deoxyadenosine + L-methionine + A + S-adenosyl-L-homocysteine + 2 H(+). In terms of biological role, catalyzes the methylthiolation of N6-(dimethylallyl)adenosine (i(6)A), leading to the formation of 2-methylthio-N6-(dimethylallyl)adenosine (ms(2)i(6)A) at position 37 in tRNAs that read codons beginning with uridine. This Microcystis aeruginosa (strain NIES-843 / IAM M-2473) protein is tRNA-2-methylthio-N(6)-dimethylallyladenosine synthase.